The sequence spans 413 residues: Aspartate aminotransferase, cytoplasmic (413 aa).

L-aspartate-binding residues include Gly39 and Trp141. The residue at position 149 (Ser149) is a Phosphoserine. Asn195 is an L-aspartate binding site. Lys259 is subject to N6-(pyridoxal phosphate)lysine. Position 387 (Arg387) interacts with L-aspartate.

It belongs to the class-I pyridoxal-phosphate-dependent aminotransferase family. As to quaternary structure, homodimer. The cofactor is pyridoxal 5'-phosphate.

The protein localises to the cytoplasm. The enzyme catalyses L-aspartate + 2-oxoglutarate = oxaloacetate + L-glutamate. It carries out the reaction L-cysteine + 2-oxoglutarate = 2-oxo-3-sulfanylpropanoate + L-glutamate. The catalysed reaction is (2S)-2-aminobutanoate + 2-oxoglutarate = 2-oxobutanoate + L-glutamate. It catalyses the reaction 3-sulfino-L-alanine + 2-oxoglutarate = 3-sulfinopyruvate + L-glutamate. Biosynthesis of L-glutamate from L-aspartate or L-cysteine. Important regulator of levels of glutamate, the major excitatory neurotransmitter of the vertebrate central nervous system. Acts as a scavenger of glutamate in brain neuroprotection. The aspartate aminotransferase activity is involved in hepatic glucose synthesis during development and in adipocyte glyceroneogenesis. Using L-cysteine as substrate, regulates levels of mercaptopyruvate, an important source of hydrogen sulfide. Mercaptopyruvate is converted into H(2)S via the action of 3-mercaptopyruvate sulfurtransferase (3MST). Hydrogen sulfide is an important synaptic modulator and neuroprotectant in the brain. The sequence is that of Aspartate aminotransferase, cytoplasmic from Pongo abelii (Sumatran orangutan).